We begin with the raw amino-acid sequence, 324 residues long: Methionyl-tRNA formyltransferase (324 aa).

112–115 (SILP) is a (6S)-5,6,7,8-tetrahydrofolate binding site.

It belongs to the Fmt family.

It catalyses the reaction L-methionyl-tRNA(fMet) + (6R)-10-formyltetrahydrofolate = N-formyl-L-methionyl-tRNA(fMet) + (6S)-5,6,7,8-tetrahydrofolate + H(+). In terms of biological role, attaches a formyl group to the free amino group of methionyl-tRNA(fMet). The formyl group appears to play a dual role in the initiator identity of N-formylmethionyl-tRNA by promoting its recognition by IF2 and preventing the misappropriation of this tRNA by the elongation apparatus. The sequence is that of Methionyl-tRNA formyltransferase from Shewanella loihica (strain ATCC BAA-1088 / PV-4).